Reading from the N-terminus, the 207-residue chain is Small ribosomal subunit protein uS4 (207 aa).

Positions 29-38 are enriched in basic and acidic residues; the sequence is SDKAKFDSKP. The tract at residues 29 to 54 is disordered; that stretch reads SDKAKFDSKPGQHGRTSGTRTSDYGL. A compositionally biased stretch (polar residues) spans 42–52; sequence GRTSGTRTSDY. The S4 RNA-binding domain maps to 97–160; it reads SRLDNVVYRM…KKQTRIAEAL (64 aa).

Belongs to the universal ribosomal protein uS4 family. In terms of assembly, part of the 30S ribosomal subunit. Contacts protein S5. The interaction surface between S4 and S5 is involved in control of translational fidelity.

Functionally, one of the primary rRNA binding proteins, it binds directly to 16S rRNA where it nucleates assembly of the body of the 30S subunit. With S5 and S12 plays an important role in translational accuracy. The chain is Small ribosomal subunit protein uS4 from Polaromonas naphthalenivorans (strain CJ2).